Consider the following 287-residue polypeptide: ATP synthase gamma chain (287 aa).

The protein belongs to the ATPase gamma chain family. In terms of assembly, F-type ATPases have 2 components, CF(1) - the catalytic core - and CF(0) - the membrane proton channel. CF(1) has five subunits: alpha(3), beta(3), gamma(1), delta(1), epsilon(1). CF(0) has three main subunits: a, b and c.

The protein localises to the cell inner membrane. Its function is as follows. Produces ATP from ADP in the presence of a proton gradient across the membrane. The gamma chain is believed to be important in regulating ATPase activity and the flow of protons through the CF(0) complex. In Pectobacterium carotovorum subsp. carotovorum (strain PC1), this protein is ATP synthase gamma chain.